We begin with the raw amino-acid sequence, 118 residues long: BolA-like protein 3 (118 aa).

This sequence belongs to the BolA/IbaG family. Interacts with NFU1.

Its subcellular location is the mitochondrion matrix. Functionally, acts as a mitochondrial iron-sulfur (Fe-S) cluster assembly factor that facilitates [4Fe-4S] cluster insertion into a subset of mitochondrial proteins such as lipoyl synthase (LS) and succinate dehydrogenase (SDH). Required during the last step of iron-sulfur protein assembly when the iron-sulfur cluster is inserted into the target protein. Acts together with NFU1, later than BOL1 and GRX5 in the [4Fe-4S] cluster insertion process. Not required for [2Fe-2S] cluster insertion into mitochondrial proteins. This Saccharomyces cerevisiae (strain ATCC 204508 / S288c) (Baker's yeast) protein is BolA-like protein 3.